The primary structure comprises 243 residues: Carboxy-S-adenosyl-L-methionine synthase (243 aa).

S-adenosyl-L-methionine-binding positions include tyrosine 40, 65–67 (GCS), 90–91 (DN), 118–119 (DI), asparagine 133, and arginine 200.

The protein belongs to the class I-like SAM-binding methyltransferase superfamily. Cx-SAM synthase family. As to quaternary structure, homodimer.

It carries out the reaction prephenate + S-adenosyl-L-methionine = carboxy-S-adenosyl-L-methionine + 3-phenylpyruvate + H2O. Its function is as follows. Catalyzes the conversion of S-adenosyl-L-methionine (SAM) to carboxy-S-adenosyl-L-methionine (Cx-SAM). The sequence is that of Carboxy-S-adenosyl-L-methionine synthase from Shewanella sp. (strain W3-18-1).